We begin with the raw amino-acid sequence, 169 residues long: Ribosome maturation factor RimP (169 aa).

The protein belongs to the RimP family.

It localises to the cytoplasm. Functionally, required for maturation of 30S ribosomal subunits. In Streptomyces avermitilis (strain ATCC 31267 / DSM 46492 / JCM 5070 / NBRC 14893 / NCIMB 12804 / NRRL 8165 / MA-4680), this protein is Ribosome maturation factor RimP.